The chain runs to 463 residues: Cysteine--tRNA ligase (463 aa).

Residue cysteine 29 participates in Zn(2+) binding. The short motif at 31–41 (MTIYDLCHIGH) is the 'HIGH' region element. 3 residues coordinate Zn(2+): cysteine 218, histidine 243, and glutamate 247. A 'KMSKS' region motif is present at residues 275 to 279 (KMSKS). Lysine 278 is a binding site for ATP.

It belongs to the class-I aminoacyl-tRNA synthetase family. As to quaternary structure, monomer. The cofactor is Zn(2+).

It is found in the cytoplasm. The catalysed reaction is tRNA(Cys) + L-cysteine + ATP = L-cysteinyl-tRNA(Cys) + AMP + diphosphate. In Polaromonas naphthalenivorans (strain CJ2), this protein is Cysteine--tRNA ligase.